We begin with the raw amino-acid sequence, 88 residues long: Apolipoprotein C-I (88 aa).

Residues 1–26 form the signal peptide; it reads MRLFIALPVLIVVVAMALEGPAPAQA.

It belongs to the apolipoprotein C1 family.

Its subcellular location is the secreted. Inhibitor of lipoprotein binding to the low density lipoprotein (LDL) receptor, LDL receptor-related protein, and very low density lipoprotein (VLDL) receptor. Associates with high density lipoproteins (HDL) and the triacylglycerol-rich lipoproteins in the plasma and makes up about 10% of the protein of the VLDL and 2% of that of HDL. Appears to interfere directly with fatty acid uptake and is also the major plasma inhibitor of cholesteryl ester transfer protein (CETP). Binds free fatty acids and reduces their intracellular esterification. Modulates the interaction of APOE with beta-migrating VLDL and inhibits binding of beta-VLDL to the LDL receptor-related protein. The polypeptide is Apolipoprotein C-I (Apoc1) (Rattus norvegicus (Rat)).